The sequence spans 428 residues: Glutamyl-tRNA reductase (428 aa).

Residues threonine 55–arginine 58, serine 114, glutamate 119–glutamine 121, and glutamine 125 each bind substrate. Residue cysteine 56 is the Nucleophile of the active site. NADP(+) is bound at residue glycine 194–isoleucine 199.

The protein belongs to the glutamyl-tRNA reductase family. In terms of assembly, homodimer.

The enzyme catalyses (S)-4-amino-5-oxopentanoate + tRNA(Glu) + NADP(+) = L-glutamyl-tRNA(Glu) + NADPH + H(+). The protein operates within porphyrin-containing compound metabolism; protoporphyrin-IX biosynthesis; 5-aminolevulinate from L-glutamyl-tRNA(Glu): step 1/2. Its function is as follows. Catalyzes the NADPH-dependent reduction of glutamyl-tRNA(Glu) to glutamate 1-semialdehyde (GSA). The chain is Glutamyl-tRNA reductase from Paraburkholderia phytofirmans (strain DSM 17436 / LMG 22146 / PsJN) (Burkholderia phytofirmans).